Here is a 200-residue protein sequence, read N- to C-terminus: Serine/arginine-rich splicing factor RSZ22 (200 aa).

In terms of domain architecture, RRM spans 2–71 (SRVYVGNLDP…NGWRVEQSHN (70 aa)). Over residues 62–83 (NGWRVEQSHNRGERGGGGRGGD) the composition is skewed to basic and acidic residues. 2 disordered regions span residues 62–97 (NGWR…RGGS) and 112–200 (RECR…RSRS). A compositionally biased stretch (gly residues) spans 84–96 (RGGGGGGRGGRGG). A CCHC-type zinc finger spans residues 99-116 (LKCYECGETGHFARECRN). Residues 120–137 (TGRRRSKSRSRTPPRYRR) are compositionally biased toward basic residues. Phosphoserine is present on residues Ser-138, Ser-147, Ser-152, Ser-160, Ser-162, Ser-174, and Ser-200. Positions 138–150 (SPSYGRRSYSPRA) are enriched in low complexity. The segment covering 151–166 (RSPPPPRRRSPSPPPA) has biased composition (pro residues).

The protein belongs to the splicing factor SR family. RSZ subfamily. As to quaternary structure, component of the spliceosome. Interacts with AFC2, RS2Z33 and RNU1. Extensively phosphorylated on serine residues in the RS domain. Phosphorylated by AFC2. As to expression, expressed in primary and lateral roots, stems, petioles, abaxial and adaxial epidermis cells, trichomes, unopened flowers, anther filaments, anthers, stigma, pollen, pollen tube, ovule funiculi, integuments, embryo sac and developing seeds.

The protein localises to the nucleus speckle. Its subcellular location is the nucleus. It localises to the nucleolus. It is found in the nucleoplasm. The protein resides in the cytoplasm. In terms of biological role, sequence-specific RNA-binding protein probably involved in pre-mRNA splicing. In vitro, can complement efficiently splicing-deficient mammalian SRSF7-depleted HeLa cell extract. The chain is Serine/arginine-rich splicing factor RSZ22 (RSZ22) from Arabidopsis thaliana (Mouse-ear cress).